Reading from the N-terminus, the 376-residue chain is Glucose-1-phosphate adenylyltransferase (376 aa).

Alpha-D-glucose 1-phosphate contacts are provided by residues tyrosine 101, glycine 166, 181–182, and serine 192; that span reads EK.

It belongs to the bacterial/plant glucose-1-phosphate adenylyltransferase family. As to quaternary structure, homotetramer.

It carries out the reaction alpha-D-glucose 1-phosphate + ATP + H(+) = ADP-alpha-D-glucose + diphosphate. Its pathway is glycan biosynthesis; glycogen biosynthesis. Its function is as follows. Involved in the biosynthesis of ADP-glucose, a building block required for the elongation reactions to produce glycogen. Catalyzes the reaction between ATP and alpha-D-glucose 1-phosphate (G1P) to produce pyrophosphate and ADP-Glc. The chain is Glucose-1-phosphate adenylyltransferase from Bacillus thuringiensis (strain Al Hakam).